The primary structure comprises 133 residues: Small ribosomal subunit protein uS8 (133 aa).

The protein belongs to the universal ribosomal protein uS8 family. Part of the 30S ribosomal subunit.

Functionally, one of the primary rRNA binding proteins, it binds directly to 16S rRNA central domain where it helps coordinate assembly of the platform of the 30S subunit. In Sulfolobus acidocaldarius (strain ATCC 33909 / DSM 639 / JCM 8929 / NBRC 15157 / NCIMB 11770), this protein is Small ribosomal subunit protein uS8.